The following is a 76-amino-acid chain: Large ribosomal subunit protein uL30 (76 aa).

It belongs to the universal ribosomal protein uL30 family. In terms of assembly, part of the 50S ribosomal subunit.

This is Large ribosomal subunit protein uL30 from Anaeromyxobacter dehalogenans (strain 2CP-1 / ATCC BAA-258).